Reading from the N-terminus, the 360-residue chain is MLLDKLEFIENKYDELSVKISDPSIMQNQNEWRKLCKEHADLEVIVNSYREYKKVVEDLKANKEMLSGESDKEMREMLNEEITDLTNREEQLETEIQILLLPKDPNDDKNVFVEIRGGAGGEEAALFAYNLFRMYTRYAETQRWGVEIMSLNETDLGGFKEVVFMIKGNGAYSKLKYESGVHRVQRVPDTESSGRIHTSTATVAVLPEVDDVEIEVADKDVRIDVFRASGNGGQCVNTTDSAVRITHLPTGLVVSCQDEKSQLKNKEKAMKVLKSRLYEQAERERAQGIAEDRKSQVGTGDRSERIRTYNYPQGRITDHRIGLTLYKLDTFLGGDIDEMINALITADQAEKMKLMGNTQM.

Position 234 is an N5-methylglutamine (Gln-234). The disordered stretch occupies residues 285–305 (RAQGIAEDRKSQVGTGDRSER).

This sequence belongs to the prokaryotic/mitochondrial release factor family. Post-translationally, methylated by PrmC. Methylation increases the termination efficiency of RF1.

Its subcellular location is the cytoplasm. Its function is as follows. Peptide chain release factor 1 directs the termination of translation in response to the peptide chain termination codons UAG and UAA. The polypeptide is Peptide chain release factor 1 (Clostridium beijerinckii (strain ATCC 51743 / NCIMB 8052) (Clostridium acetobutylicum)).